The primary structure comprises 314 residues: Olfactory receptor 5I1 (314 aa).

Topologically, residues 1–27 (MEFTDRNYTLVTEFILLGFPTRPELQI) are extracellular. N-linked (GlcNAc...) asparagine glycosylation occurs at Asn7. A helical membrane pass occupies residues 28-48 (VLFLMFLTLYAIILIGNIGLM). Residues 49-56 (LLIRIDPH) are Cytoplasmic-facing. The chain crosses the membrane as a helical span at residues 57–77 (LQTPMYFFLSNLSFVDLCYFS). Over 78 to 101 (DIVPKMLVNFLSENKSISYYGCAL) the chain is Extracellular. A disulfide bond links Cys99 and Cys191. A helical transmembrane segment spans residues 102–122 (QFYFFCTFADTESFILAAMAY). Topologically, residues 123–141 (DRYVAICNPLLYTVVMSRG) are cytoplasmic. Residues 142-162 (ICMRLIVLSYLGGNMSSLVHT) form a helical membrane-spanning segment. The Extracellular portion of the chain corresponds to 163 to 198 (SFAFILKYCDKNVINHFFCDLPPLLKLSCTDTTINE). A helical membrane pass occupies residues 199–219 (WLLSTYGSSVEIICFIIIIIS). The Cytoplasmic segment spans residues 220–239 (YFFILLSVLKIRSFSGRKKT). Residues 240–260 (FSTCASHLTSVTIYQGTLLFI) traverse the membrane as a helical segment. Residues 261 to 273 (YSRPSYLYSPNTD) lie on the Extracellular side of the membrane. A helical membrane pass occupies residues 274 to 294 (KIISVFYTIFIPVLNPLIYSL). Residues 295-314 (RNKDVKDAAEKVLRSKVDSS) are Cytoplasmic-facing.

The protein belongs to the G-protein coupled receptor 1 family.

It is found in the cell membrane. Its function is as follows. Odorant receptor. The sequence is that of Olfactory receptor 5I1 (OR5I1) from Homo sapiens (Human).